The sequence spans 340 residues: MGRDEEAAARAEAWNHGFGFIKTSVIKTAIELEIPDILHNHGAPLSLSALSSAVGVPPDRLHRIMRFLTHHGVSKKTASPPGESDYYYAETAVSRSLTKDNLGAFVLLQGAQRGPSACITAQGLKSRERPGVEELGSDPLYEDPIFTKMVFRDAMACHARLTTSAVIENYGEGFRGVGSLVDVGGSYGMTLGMLVEAFPWIRGICYDLPQVVAKAKPLHGVEFVAGSMFESVPEADVVMLMFVLHNWSDNECIDILKRCKEAIPRETGKVMIIDAIIEEDGEGDEFAEARLGLDVTMMAVTFEGKERTHREWAFILKEAGFRKYVVKNIKALESLIEAYP.

Aspartate 207 is an S-adenosyl-L-methionine binding site. The Proton acceptor role is filled by histidine 245.

The protein belongs to the class I-like SAM-binding methyltransferase superfamily. Cation-independent O-methyltransferase family. As to quaternary structure, homodimer. As to expression, expressed in leaves.

It carries out the reaction scutellarein 4'-methyl ether + S-adenosyl-L-methionine = ladanein + S-adenosyl-L-homocysteine. It catalyses the reaction acacetin + S-adenosyl-L-methionine = apigenin 4',7-dimethyl ether + S-adenosyl-L-homocysteine. The catalysed reaction is diosmetin + S-adenosyl-L-methionine = luteolin 4',7-dimethyl ether + S-adenosyl-L-homocysteine. The enzyme catalyses chrysoeriol + S-adenosyl-L-methionine = velutin + S-adenosyl-L-homocysteine. It carries out the reaction (2S)-naringenin + S-adenosyl-L-methionine = (2S)-sakuranetin + S-adenosyl-L-homocysteine + H(+). It catalyses the reaction apigenin + S-adenosyl-L-methionine = genkwanin + S-adenosyl-L-homocysteine + H(+). The catalysed reaction is luteolin + S-adenosyl-L-methionine = luteolin 7-methyl ether + S-adenosyl-L-homocysteine + H(+). The enzyme catalyses scutellarein + S-adenosyl-L-methionine = scutellarein 7-methyl ether + S-adenosyl-L-homocysteine. It participates in flavonoid metabolism. In terms of biological role, flavonoid 7-O-methyltransferase involved in the biosynthesis of polymethoxylated flavonoids natural products such as nevadensin and salvigenin, aroma compounds which contribute to the flavor of sweet basil, and exhibit pharmacological activities such as anti-allergic, anti-oxidant, antibacterial, anti-proliferative, and anti-inflammatory effects. Catalyzes S-adenosylmethionine-dependent regioselective 7-O-methylation of flavonoids; active on various hydroxylated flavonoid substrates, including apigenin (API) and luteolin (LUT), and, with a lower efficiency, scutellarein (SCU), naringenin (NAR), chrysoeriol (CHRYS), diosmetin (DIOS), acacetin (ACA) and scutellarein-7-methyl ether (SCU7Me). This chain is Flavonoid 7-O-methyltransferase 2, found in Ocimum basilicum (Sweet basil).